We begin with the raw amino-acid sequence, 598 residues long: 4-coumarate--CoA ligase-like 6 (598 aa).

ATP-binding residues include S232, S233, G234, T235, T236, and K240. Residue R318 coordinates CoA. The SBD1 stretch occupies residues 320-389 (DLAAAARAVE…TVFPSVQIVQ (70 aa)). (E)-4-coumaroyl-AMP-binding residues include G367, Q389, and T394. Positions 389, 394, 475, and 490 each coordinate ATP. The tract at residues 390–454 (SYGLTESTGP…IRGPVVMKGY (65 aa)) is SBD2. The (E)-4-coumaroyl-AMP site is built by K492 and K496. Residues K498 and G499 each coordinate CoA. K581 lines the ATP pocket.

It belongs to the ATP-dependent AMP-binding enzyme family. It depends on Mg(2+) as a cofactor.

It catalyses the reaction (E)-4-coumarate + ATP + CoA = (E)-4-coumaroyl-CoA + AMP + diphosphate. The enzyme catalyses (E)-4-coumarate + ATP + H(+) = (E)-4-coumaroyl-AMP + diphosphate. The catalysed reaction is (E)-4-coumaroyl-AMP + CoA = (E)-4-coumaroyl-CoA + AMP + H(+). Carboxylate--CoA ligase that may use 4-coumarate as substrate. Follows a two-step reaction mechanism, wherein the carboxylate substrate first undergoes adenylation by ATP, followed by a thioesterification in the presence of CoA to yield the final CoA thioester. The polypeptide is 4-coumarate--CoA ligase-like 6 (4CLL6) (Oryza sativa subsp. japonica (Rice)).